We begin with the raw amino-acid sequence, 266 residues long: Protein-ADP-ribose hydrolase (266 aa).

The 192-residue stretch at 74–265 (TDLKDLKPIK…LYKEALNRDA (192 aa)) folds into the Macro domain. Positions 93, 94, and 107 each coordinate ADP-D-ribose. 3 residues coordinate Zn(2+): Cys-113, His-118, and Cys-120. Positions 120, 121, 122, 212, 213, 214, and 216 each coordinate ADP-D-ribose.

Belongs to the MacroD-type family. Zn-Macro subfamily. In terms of assembly, monomer. Directly interacts with the lipoylated form of GcvH-L. Requires Zn(2+) as cofactor.

The catalysed reaction is 4-O-(ADP-D-ribosyl)-L-aspartyl-[protein] + H2O = L-aspartyl-[protein] + ADP-D-ribose + H(+). Functionally, ADP-ribosylhydrolase that specifically reverses the SirTM-mediated mono-ADP-ribosylation at an asparatate residue of GcvH-L (SAV0324), by releasing ADP-ribose from the target protein. May play a role in the regulation of the response to host-induced oxidative stress. This is Protein-ADP-ribose hydrolase from Staphylococcus aureus (strain Mu50 / ATCC 700699).